A 414-amino-acid chain; its full sequence is Protein ABHD18 (414 aa).

Residues 1–24 form the signal peptide; that stretch reads MGVSKLDILYRRLLLTKLFIRGWG. N-linked (GlcNAc...) asparagine glycans are attached at residues Asn-282 and Asn-307.

Belongs to the AB hydrolase superfamily.

The protein resides in the secreted. This chain is Protein ABHD18, found in Homo sapiens (Human).